Consider the following 283-residue polypeptide: Phosphatidylserine decarboxylase proenzyme (283 aa).

Active-site charge relay system; for autoendoproteolytic cleavage activity residues include Asp-96, His-152, and Ser-250. The Schiff-base intermediate with substrate; via pyruvic acid; for decarboxylase activity role is filled by Ser-250. The residue at position 250 (Ser-250) is a Pyruvic acid (Ser); by autocatalysis.

It belongs to the phosphatidylserine decarboxylase family. PSD-B subfamily. Prokaryotic type I sub-subfamily. In terms of assembly, heterodimer of a large membrane-associated beta subunit and a small pyruvoyl-containing alpha subunit. The cofactor is pyruvate. Post-translationally, is synthesized initially as an inactive proenzyme. Formation of the active enzyme involves a self-maturation process in which the active site pyruvoyl group is generated from an internal serine residue via an autocatalytic post-translational modification. Two non-identical subunits are generated from the proenzyme in this reaction, and the pyruvate is formed at the N-terminus of the alpha chain, which is derived from the carboxyl end of the proenzyme. The autoendoproteolytic cleavage occurs by a canonical serine protease mechanism, in which the side chain hydroxyl group of the serine supplies its oxygen atom to form the C-terminus of the beta chain, while the remainder of the serine residue undergoes an oxidative deamination to produce ammonia and the pyruvoyl prosthetic group on the alpha chain. During this reaction, the Ser that is part of the protease active site of the proenzyme becomes the pyruvoyl prosthetic group, which constitutes an essential element of the active site of the mature decarboxylase.

Its subcellular location is the cell membrane. The catalysed reaction is a 1,2-diacyl-sn-glycero-3-phospho-L-serine + H(+) = a 1,2-diacyl-sn-glycero-3-phosphoethanolamine + CO2. The protein operates within phospholipid metabolism; phosphatidylethanolamine biosynthesis; phosphatidylethanolamine from CDP-diacylglycerol: step 2/2. Catalyzes the formation of phosphatidylethanolamine (PtdEtn) from phosphatidylserine (PtdSer). This is Phosphatidylserine decarboxylase proenzyme from Acinetobacter baumannii (strain AB0057).